Here is a 319-residue protein sequence, read N- to C-terminus: Extracellular phospholipase A1 (319 aa).

Residues 1-24 form the signal peptide; it reads MSMPLSFTSAVSPVAAIPTPRAAA.

The enzyme catalyses a 1,2-diacyl-sn-glycero-3-phosphocholine + H2O = a 2-acyl-sn-glycero-3-phosphocholine + a fatty acid + H(+). This is Extracellular phospholipase A1 (phlA) from Serratia liquefaciens.